We begin with the raw amino-acid sequence, 331 residues long: Protein REVEILLE 6 (331 aa).

In terms of domain architecture, HTH myb-type spans 67 to 121 (TITKSRESWTEPEHDKFLEALQLFDRDWKKIEAFIGSKTVIQIRSHAQKYFLKVQ). The segment at residues 94–117 (WKKIEAFIGSKTVIQIRSHAQKYF) is a DNA-binding region (H-T-H motif). Disordered regions lie at residues 122–166 (KSGT…EPND), 203–237 (LPKAGAGANNNCSSSSENTPRPRSNRDARDHGNVG), and 309–331 (SETATDHGGVNKTLNKDPPEIST). The span at 150–165 (VQLQVPGSFKSTSEPN) shows a compositional bias: polar residues. Over residues 211 to 220 (NNNCSSSSEN) the composition is skewed to low complexity. Basic and acidic residues-rich tracts occupy residues 226 to 235 (SNRDARDHGN) and 322 to 331 (LNKDPPEIST).

Its subcellular location is the nucleus. In terms of biological role, probable transcription factor. RVE4, RVE6 and RVE8 are components of the circadian system acting synergistically to regulate flowering time, redundantly to regulate leaf growth, and antagonistically to regulate hypocotyl elongation; their action seems independent of ZTL and HY5. This Arabidopsis thaliana (Mouse-ear cress) protein is Protein REVEILLE 6.